A 190-amino-acid chain; its full sequence is Putative manganese efflux pump MntP (190 aa).

6 helical membrane passes run 3 to 23 (MSAT…ASIG), 41 to 61 (LIFG…GFFA), 62 to 82 (SQYI…ILGG), 105 to 127 (LALL…VGLA), 143 to 163 (ATMI…PILG), and 168 to 188 (VMGG…HLGY).

This sequence belongs to the MntP (TC 9.B.29) family.

The protein resides in the cell inner membrane. Functionally, probably functions as a manganese efflux pump. This chain is Putative manganese efflux pump MntP, found in Pectobacterium carotovorum subsp. carotovorum (strain PC1).